The primary structure comprises 231 residues: Large ribosomal subunit protein uL1 (231 aa).

This sequence belongs to the universal ribosomal protein uL1 family. As to quaternary structure, part of the 50S ribosomal subunit.

Binds directly to 23S rRNA. The L1 stalk is quite mobile in the ribosome, and is involved in E site tRNA release. Functionally, protein L1 is also a translational repressor protein, it controls the translation of the L11 operon by binding to its mRNA. In Pseudomonas aeruginosa (strain LESB58), this protein is Large ribosomal subunit protein uL1.